Reading from the N-terminus, the 332-residue chain is DNA-directed RNA polymerase subunit alpha (332 aa).

The alpha N-terminal domain (alpha-NTD) stretch occupies residues 1–234; that stretch reads MTVTANQVLR…DQLSVFGDFT (234 aa). The alpha C-terminal domain (alpha-CTD) stretch occupies residues 248 to 332; that stretch reads VDPVLLRPID…AGVASHGMLG (85 aa).

Belongs to the RNA polymerase alpha chain family. In terms of assembly, homodimer. The RNAP catalytic core consists of 2 alpha, 1 beta, 1 beta' and 1 omega subunit. When a sigma factor is associated with the core the holoenzyme is formed, which can initiate transcription.

It carries out the reaction RNA(n) + a ribonucleoside 5'-triphosphate = RNA(n+1) + diphosphate. Its function is as follows. DNA-dependent RNA polymerase catalyzes the transcription of DNA into RNA using the four ribonucleoside triphosphates as substrates. This Stenotrophomonas maltophilia (strain K279a) protein is DNA-directed RNA polymerase subunit alpha.